The primary structure comprises 154 residues: Myoglobin (154 aa).

In terms of domain architecture, Globin spans 2–148 (VLSEGEWQLV…FRKDIAAKYK (147 aa)). A Phosphoserine modification is found at S4. H65 contacts nitrite. H65 lines the O2 pocket. T68 carries the post-translational modification Phosphothreonine. Residue H94 participates in heme b binding.

Belongs to the globin family. In terms of assembly, monomeric.

It localises to the cytoplasm. The protein resides in the sarcoplasm. It catalyses the reaction Fe(III)-heme b-[protein] + nitric oxide + H2O = Fe(II)-heme b-[protein] + nitrite + 2 H(+). The catalysed reaction is H2O2 + AH2 = A + 2 H2O. In terms of biological role, monomeric heme protein which primary function is to store oxygen and facilitate its diffusion within muscle tissues. Reversibly binds oxygen through a pentacoordinated heme iron and enables its timely and efficient release as needed during periods of heightened demand. Depending on the oxidative conditions of tissues and cells, and in addition to its ability to bind oxygen, it also has a nitrite reductase activity whereby it regulates the production of bioactive nitric oxide. Under stress conditions, like hypoxia and anoxia, it also protects cells against reactive oxygen species thanks to its pseudoperoxidase activity. The chain is Myoglobin (MB) from Physeter macrocephalus (Sperm whale).